We begin with the raw amino-acid sequence, 202 residues long: Small ribosomal subunit protein uS4 (202 aa).

The segment covering 1-13 (MSRYRGPRLRITR) has biased composition (basic residues). The segment at 1–43 (MSRYRGPRLRITRRLGDLPGLTRKAAKRSHPPGQHGQARRKRS) is disordered. In terms of domain architecture, S4 RNA-binding spans 90–152 (NRLDNVCFRL…KGSKKLAEAN (63 aa)).

This sequence belongs to the universal ribosomal protein uS4 family. As to quaternary structure, part of the 30S ribosomal subunit. Contacts protein S5. The interaction surface between S4 and S5 is involved in control of translational fidelity.

In terms of biological role, one of the primary rRNA binding proteins, it binds directly to 16S rRNA where it nucleates assembly of the body of the 30S subunit. With S5 and S12 plays an important role in translational accuracy. This chain is Small ribosomal subunit protein uS4, found in Prochlorococcus marinus (strain MIT 9303).